Reading from the N-terminus, the 119-residue chain is Integration host factor subunit beta (119 aa).

Residues 93-119 (AGGLADTQPDGDAPDQPQPTLLGLHAM) are disordered. The segment covering 97–112 (ADTQPDGDAPDQPQPT) has biased composition (low complexity).

This sequence belongs to the bacterial histone-like protein family. Heterodimer of an alpha and a beta chain.

Functionally, this protein is one of the two subunits of integration host factor, a specific DNA-binding protein that functions in genetic recombination as well as in transcriptional and translational control. In Bordetella petrii (strain ATCC BAA-461 / DSM 12804 / CCUG 43448), this protein is Integration host factor subunit beta.